Here is a 379-residue protein sequence, read N- to C-terminus: Salicylate/benzoate carboxyl methyltransferase (379 aa).

Residue Tyr40 participates in S-adenosyl-L-homocysteine binding. Gln47 is a salicylate binding site. Positions 82, 87, 119, 120, 155, and 156 each coordinate S-adenosyl-L-homocysteine. Salicylate-binding residues include His176 and Trp177. Mg(2+) is bound by residues Asn188, Asp275, Phe277, and Asn278.

The protein belongs to the methyltransferase superfamily. Type-7 methyltransferase family. SABATH subfamily. Homodimer. It depends on Mg(2+) as a cofactor. Expressed in flowers and at lower levels in leaves and stems. Hardly detected in roots and siliques. Expressed in the sepals and the leaf trichomes and hydathodes.

The enzyme catalyses benzoate + S-adenosyl-L-methionine = methyl benzoate + S-adenosyl-L-homocysteine. The catalysed reaction is salicylate + S-adenosyl-L-methionine = methyl salicylate + S-adenosyl-L-homocysteine. In terms of biological role, methyltransferase involved in the biosynthesis of methylsalicylate in response to stresses. Utilizes salicylic acid (SA) more efficiently than benzoic acid (BA). Can also use anthranilic acid and m-hydroxybenzoic acid as substrate. This Arabidopsis thaliana (Mouse-ear cress) protein is Salicylate/benzoate carboxyl methyltransferase (BSMT1).